Consider the following 92-residue polypeptide: Promotilin (92 aa).

Residues 12–49 form a disordered region; that stretch reads RMQEKERNRGQKKSLGLQQRSEEVGSLDPTEAAEEEGK.

The protein belongs to the motilin family.

It is found in the secreted. Functionally, plays an important role in the regulation of interdigestive gastrointestinal motility and indirectly causes rhythmic contraction of duodenal and colonic smooth muscle. The polypeptide is Promotilin (MLN) (Equus caballus (Horse)).